The sequence spans 1248 residues: Cullin-associated NEDD8-dissociated protein 1 (1248 aa).

HEAT repeat units follow at residues 44-82 (DESEKKVVRMVLKLLEDKNGEVQNLAVKCLGPLVNKVKE), 127-165 (PNVCQRITGKLSTAIEKEDVSVKLESLDILADLLSRFGE), 168-206 (VPFHSTILKALMPQLASSRQAVRKRTIVALSFLLIQANS), 365-403 (EDFYRSLSPALIARFKEREENVKSDIFHAYVALLKNTRL), 425-463 (IEQLPLIVKAIQPLMREKSMKTRQDCFLLLRELLNSLPG), 510-548 (HPHIPLLVPLVVTSVFDPFYKIATEALLVLQQLVKVIRP), 604-642 (QNELAVCLPIFMERLKNEVTRLSSVKALTLIAASSLRID), 644-682 (TPILHDVLPALGTFLRKNHRALKLHSLDLINKIVINYSS), 861-900 (DLSSIQVLPQTIIECFGATSEDVKAAASHALGAVSVGSLQ), 976-1014 (LVNPDELLPQLQQALRSESATMRTVVVSSVKFTISDQPQ), and 1054-1093 (PSLVRDLLPTLLPWLYSETKVKSELIREVEMGPFKHTVDD).

It belongs to the CAND family.

In terms of biological role, key assembly factor of SCF (SKP1-CUL1-F-box protein) E3 ubiquitin ligase complexes that promotes the exchange of the substrate-recognition F-box subunit in SCF complexes, thereby playing a key role in the cellular repertoire of SCF complexes. Acts as a F-box protein exchange factor. Probably plays a similar role in other cullin-RING E3 ubiquitin ligase complexes. The sequence is that of Cullin-associated NEDD8-dissociated protein 1 (Cand1) from Drosophila melanogaster (Fruit fly).